The chain runs to 348 residues: Dihydroorotase (348 aa).

Zn(2+)-binding residues include histidine 17 and histidine 19. Residues 19 to 21 (HLR) and asparagine 45 contribute to the substrate site. The Zn(2+) site is built by lysine 103, histidine 140, and histidine 178. Lysine 103 is subject to N6-carboxylysine. Histidine 140 is a binding site for substrate. Leucine 223 provides a ligand contact to substrate. Zn(2+) is bound at residue aspartate 251. Aspartate 251 is an active-site residue. Substrate contacts are provided by histidine 255 and alanine 267.

Belongs to the metallo-dependent hydrolases superfamily. DHOase family. Class II DHOase subfamily. As to quaternary structure, homodimer. Zn(2+) serves as cofactor.

The catalysed reaction is (S)-dihydroorotate + H2O = N-carbamoyl-L-aspartate + H(+). It participates in pyrimidine metabolism; UMP biosynthesis via de novo pathway; (S)-dihydroorotate from bicarbonate: step 3/3. Functionally, catalyzes the reversible cyclization of carbamoyl aspartate to dihydroorotate. The sequence is that of Dihydroorotase from Salmonella dublin (strain CT_02021853).